A 502-amino-acid chain; its full sequence is Glycerol kinase (502 aa).

T14 serves as a coordination point for ADP. Positions 14, 15, and 16 each coordinate ATP. T14 serves as a coordination point for sn-glycerol 3-phosphate. Position 18 (R18) interacts with ADP. Positions 84, 85, 136, and 246 each coordinate sn-glycerol 3-phosphate. Residues R84, E85, Y136, D246, and Q247 each coordinate glycerol. ADP contacts are provided by T268 and G311. The ATP site is built by T268, G311, Q315, and G412. Residues G412 and N416 each coordinate ADP.

Belongs to the FGGY kinase family. Homotetramer and homodimer (in equilibrium). Heterodimer with EIIA-Glc. Binds 1 zinc ion per glycerol kinase EIIA-Glc dimer. The zinc ion is important for dimerization.

The enzyme catalyses glycerol + ATP = sn-glycerol 3-phosphate + ADP + H(+). It participates in polyol metabolism; glycerol degradation via glycerol kinase pathway; sn-glycerol 3-phosphate from glycerol: step 1/1. Activity of this regulatory enzyme is affected by several metabolites. Allosterically and non-competitively inhibited by fructose 1,6-bisphosphate (FBP) and unphosphorylated phosphocarrier protein EIIA-Glc (III-Glc), an integral component of the bacterial phosphotransferase (PTS) system. Functionally, key enzyme in the regulation of glycerol uptake and metabolism. Catalyzes the phosphorylation of glycerol to yield sn-glycerol 3-phosphate. The sequence is that of Glycerol kinase from Enterobacter sp. (strain 638).